A 339-amino-acid polypeptide reads, in one-letter code: tRNA N6-adenosine threonylcarbamoyltransferase (339 aa).

Histidine 111 and histidine 115 together coordinate Fe cation. Substrate is bound by residues 134–138 (LVSGG), aspartate 167, glycine 180, and asparagine 272. Residue aspartate 300 participates in Fe cation binding.

This sequence belongs to the KAE1 / TsaD family. Fe(2+) serves as cofactor.

The protein localises to the cytoplasm. It catalyses the reaction L-threonylcarbamoyladenylate + adenosine(37) in tRNA = N(6)-L-threonylcarbamoyladenosine(37) in tRNA + AMP + H(+). In terms of biological role, required for the formation of a threonylcarbamoyl group on adenosine at position 37 (t(6)A37) in tRNAs that read codons beginning with adenine. Is involved in the transfer of the threonylcarbamoyl moiety of threonylcarbamoyl-AMP (TC-AMP) to the N6 group of A37, together with TsaE and TsaB. TsaD likely plays a direct catalytic role in this reaction. This chain is tRNA N6-adenosine threonylcarbamoyltransferase, found in Vibrio vulnificus (strain YJ016).